The chain runs to 448 residues: Phosphoglucosamine mutase (448 aa).

Ser-100 (phosphoserine intermediate) is an active-site residue. Mg(2+) contacts are provided by Ser-100, Asp-240, Asp-242, and Asp-244. Phosphoserine is present on Ser-100.

It belongs to the phosphohexose mutase family. Mg(2+) serves as cofactor. In terms of processing, activated by phosphorylation.

The catalysed reaction is alpha-D-glucosamine 1-phosphate = D-glucosamine 6-phosphate. Catalyzes the conversion of glucosamine-6-phosphate to glucosamine-1-phosphate. This is Phosphoglucosamine mutase from Bacillus velezensis (strain DSM 23117 / BGSC 10A6 / LMG 26770 / FZB42) (Bacillus amyloliquefaciens subsp. plantarum).